Here is a 206-residue protein sequence, read N- to C-terminus: Large ribosomal subunit protein uL4 (206 aa).

The segment at 51–76 (AKTRAEVSGGGIKPWRQKGTGRARQG) is disordered.

This sequence belongs to the universal ribosomal protein uL4 family. In terms of assembly, part of the 50S ribosomal subunit.

In terms of biological role, one of the primary rRNA binding proteins, this protein initially binds near the 5'-end of the 23S rRNA. It is important during the early stages of 50S assembly. It makes multiple contacts with different domains of the 23S rRNA in the assembled 50S subunit and ribosome. Forms part of the polypeptide exit tunnel. The polypeptide is Large ribosomal subunit protein uL4 (Clostridium kluyveri (strain ATCC 8527 / DSM 555 / NBRC 12016 / NCIMB 10680 / K1)).